Here is a 294-residue protein sequence, read N- to C-terminus: Ribosomal RNA small subunit methyltransferase H (294 aa).

S-adenosyl-L-methionine-binding positions include 40-42 (GGH), aspartate 59, phenylalanine 86, aspartate 102, and glutamine 109.

Belongs to the methyltransferase superfamily. RsmH family.

It is found in the cytoplasm. The enzyme catalyses cytidine(1402) in 16S rRNA + S-adenosyl-L-methionine = N(4)-methylcytidine(1402) in 16S rRNA + S-adenosyl-L-homocysteine + H(+). Functionally, specifically methylates the N4 position of cytidine in position 1402 (C1402) of 16S rRNA. The polypeptide is Ribosomal RNA small subunit methyltransferase H (Cyanothece sp. (strain PCC 7425 / ATCC 29141)).